The sequence spans 471 residues: Cysteine--tRNA ligase (471 aa).

A Zn(2+)-binding site is contributed by C29. Residues 31–41 carry the 'HIGH' region motif; the sequence is PTVYNYIHIGN. Residues C209, H234, and E238 each contribute to the Zn(2+) site. The short motif at 266–270 is the 'KMSKS' region element; that stretch reads KMSKS. Residue K269 coordinates ATP.

Belongs to the class-I aminoacyl-tRNA synthetase family. As to quaternary structure, monomer. Zn(2+) serves as cofactor.

It is found in the cytoplasm. The catalysed reaction is tRNA(Cys) + L-cysteine + ATP = L-cysteinyl-tRNA(Cys) + AMP + diphosphate. This Listeria welshimeri serovar 6b (strain ATCC 35897 / DSM 20650 / CCUG 15529 / CIP 8149 / NCTC 11857 / SLCC 5334 / V8) protein is Cysteine--tRNA ligase.